The sequence spans 246 residues: UDP-N-acetyl-D-mannosaminuronic acid transferase (246 aa).

This sequence belongs to the glycosyltransferase 26 family.

The enzyme catalyses UDP-N-acetyl-alpha-D-mannosaminouronate + N-acetyl-alpha-D-glucosaminyl-di-trans,octa-cis-undecaprenyl diphosphate = beta-D-ManNAcA-(1-&gt;4)-alpha-D-GlcNAc-di-trans,octa-cis-undecaprenyl diphosphate + UDP + H(+). It participates in bacterial outer membrane biogenesis; enterobacterial common antigen biosynthesis. Functionally, catalyzes the synthesis of Und-PP-GlcNAc-ManNAcA (Lipid II), the second lipid-linked intermediate involved in enterobacterial common antigen (ECA) synthesis. This chain is UDP-N-acetyl-D-mannosaminuronic acid transferase, found in Salmonella choleraesuis (strain SC-B67).